The primary structure comprises 370 residues: Flagellar P-ring protein (370 aa).

The N-terminal stretch at 1 to 28 (MTFFTRCFRRGALLFLLAVLLLPSPAQA) is a signal peptide.

This sequence belongs to the FlgI family. In terms of assembly, the basal body constitutes a major portion of the flagellar organelle and consists of four rings (L,P,S, and M) mounted on a central rod.

The protein resides in the periplasm. The protein localises to the bacterial flagellum basal body. In terms of biological role, assembles around the rod to form the L-ring and probably protects the motor/basal body from shearing forces during rotation. This chain is Flagellar P-ring protein, found in Oleidesulfovibrio alaskensis (strain ATCC BAA-1058 / DSM 17464 / G20) (Desulfovibrio alaskensis).